A 414-amino-acid polypeptide reads, in one-letter code: Serine/threonine transporter SstT (414 aa).

Topologically, residues 2 to 15 (TTQRSPGLFRRLAH) are cytoplasmic. A helical transmembrane segment spans residues 16–36 (GSLVKQILVGLVLGILLAWIS). Over 37–45 (KPAAEAVGL) the chain is Periplasmic. Residues 46–66 (LGTLFVGALKAVAPILVLMLV) traverse the membrane as a helical segment. At 67-83 (MASIANHQHGQKTNILP) the chain is on the cytoplasmic side. The chain crosses the membrane as a helical span at residues 84-104 (ILFLYLLGTFSAALAAVVFSF). The Periplasmic portion of the chain corresponds to 105–142 (AFPSTLHLSSSAGDISPPSGIVEVMRGLVMSMVSNPID). The helical transmembrane segment at 143–163 (ALLKGNYIGILVWAIGLGFAL) threads the bilayer. Over 164–179 (RHGNETTKNLVNDMSN) the chain is Cytoplasmic. A helical transmembrane segment spans residues 180–200 (AVTFMVKLVIRFAPIGIFGLV). Topologically, residues 201 to 217 (SSTLATTGFSTLWGYAQ) are periplasmic. A helical membrane pass occupies residues 218-238 (LLVVLVGCMLLVALVVNPLLV). The Cytoplasmic segment spans residues 239-299 (WWKIRRNPFP…VSIPLGATIN (61 aa)). The helical transmembrane segment at 300-320 (MAGAAITITVLTLAAVNTLGI) threads the bilayer. Topologically, residues 321–331 (PVDLPTALLLS) are periplasmic. The chain crosses the membrane as a helical span at residues 332 to 352 (VVASLCACGASGVAGGSLLLI). Over 353 to 414 (PLACNMFGIS…DRLANSALRN (62 aa)) the chain is Cytoplasmic.

The protein belongs to the dicarboxylate/amino acid:cation symporter (DAACS) (TC 2.A.23) family.

Its subcellular location is the cell inner membrane. It catalyses the reaction L-serine(in) + Na(+)(in) = L-serine(out) + Na(+)(out). The catalysed reaction is L-threonine(in) + Na(+)(in) = L-threonine(out) + Na(+)(out). Functionally, involved in the import of serine and threonine into the cell, with the concomitant import of sodium (symport system). The sequence is that of Serine/threonine transporter SstT from Shigella dysenteriae serotype 1 (strain Sd197).